Reading from the N-terminus, the 377-residue chain is Palmitoyltransferase ZDHHC16 (377 aa).

Residues 1–77 (MRGQRSLLLG…VYWLVDNVIR (77 aa)) lie on the Cytoplasmic side of the membrane. A helical membrane pass occupies residues 78–98 (WFGVVFVVLVIVLTGSIVAIA). Residues 99–116 (YLCVLPLILRTYSVPRLC) are Lumenal-facing. A helical transmembrane segment spans residues 117–137 (WHFFYSHWNLILIVFHYYQAI). Over 138–198 (TTPPGYPPQG…NNCVGHYNHR (61 aa)) the chain is Cytoplasmic. The DHHC domain maps to 155–205 (SICKKCIYPKPARTHHCSICNRCVLKMDHHCPWLNNCVGHYNHRYFFSFCF). Catalysis depends on cysteine 185, which acts as the S-palmitoyl cysteine intermediate. The chain crosses the membrane as a helical span at residues 199–219 (YFFSFCFFMTLGCVYCSYGSW). Over 220–266 (DLFREAYAAIEKMKQLDKNKLQAVANQTYHQTPPPIFSFRERMTHKS) the chain is Lumenal. A helical transmembrane segment spans residues 267-287 (LVYLWFLCSSVALALGALTVW). Residues 288 to 377 (HAVLISRGET…TAHSASVMAV (90 aa)) lie on the Cytoplasmic side of the membrane.

Belongs to the DHHC palmitoyltransferase family. Interacts with ABL1. Interacts with COPS5/JAB1.

It is found in the endoplasmic reticulum membrane. It catalyses the reaction L-cysteinyl-[protein] + hexadecanoyl-CoA = S-hexadecanoyl-L-cysteinyl-[protein] + CoA. In terms of biological role, palmitoyl acyltransferase that mediates palmitoylation of proteins such as PLN and ZDHHC6. Required during embryonic heart development and cardiac function, possibly by mediating palmitoylation of PLN, thereby affecting PLN phosphorylation and homooligomerization. Also required for eye development. Palmitoylates ZDHHC6, affecting the quaternary assembly of ZDHHC6, its localization, stability and function. May play a role in DNA damage response. May be involved in apoptosis regulation. Involved in the proliferation of neural stem cells by regulating the FGF/ERK pathway. This is Palmitoyltransferase ZDHHC16 from Macaca fascicularis (Crab-eating macaque).